The chain runs to 641 residues: Phosphomethylpyrimidine synthase (641 aa).

Residues Asn221, Met250, Tyr279, His315, 335-337 (SRG), 376-379 (DGLR), and Glu415 each bind substrate. His419 contributes to the Zn(2+) binding site. Tyr442 serves as a coordination point for substrate. A Zn(2+)-binding site is contributed by His483. [4Fe-4S] cluster is bound by residues Cys563, Cys566, and Cys571.

Belongs to the ThiC family. In terms of assembly, homodimer. [4Fe-4S] cluster serves as cofactor.

It carries out the reaction 5-amino-1-(5-phospho-beta-D-ribosyl)imidazole + S-adenosyl-L-methionine = 4-amino-2-methyl-5-(phosphooxymethyl)pyrimidine + CO + 5'-deoxyadenosine + formate + L-methionine + 3 H(+). The protein operates within cofactor biosynthesis; thiamine diphosphate biosynthesis. Its function is as follows. Catalyzes the synthesis of the hydroxymethylpyrimidine phosphate (HMP-P) moiety of thiamine from aminoimidazole ribotide (AIR) in a radical S-adenosyl-L-methionine (SAM)-dependent reaction. This Rhodopseudomonas palustris (strain TIE-1) protein is Phosphomethylpyrimidine synthase.